The following is a 74-amino-acid chain: CLAVATA3/ESR (CLE)-related protein 19 (74 aa).

An N-terminal signal peptide occupies residues 1–24 (MKIKGLMILASSLLILAFIHQSES). Residues N34 and N54 are each glycosylated (N-linked (GlcNAc...) asparagine). P65 and P68 each carry hydroxyproline. P68 carries an O-linked (Ara...) hydroxyproline glycan.

It belongs to the CLV3/ESR signal peptide family. In terms of processing, the O-glycosylation (arabinosylation) of the hydroxyproline Pro-68 enhances binding affinity of the CLE19p peptide for its receptor. As to expression, mostly expressed in heart-shape embryos, pollen and young flower buds, and, to a lower extent, in inflorescence, leaves and roots.

The protein resides in the secreted. It localises to the extracellular space. In terms of biological role, extracellular signal peptide that regulates cell fate. Represses root apical meristem maintenance. This Arabidopsis thaliana (Mouse-ear cress) protein is CLAVATA3/ESR (CLE)-related protein 19.